Here is a 361-residue protein sequence, read N- to C-terminus: Deoxyribonuclease (361 aa).

Positions 1 to 24 (MMHLLRRGAFAILLIVLLPSAALA) are cleaved as a signal peptide. His-149 is an active-site residue.

The protein belongs to the DNase I family. Mg(2+) serves as cofactor. It depends on Ca(2+) as a cofactor.

The protein localises to the secreted. In terms of biological role, DNA nuclease able to digest short and long DNA substrate. Is resistant to ionic strength and thus active at high salt concentration. This Thioalkalivibrio sp. (strain K90mix) protein is Deoxyribonuclease.